The primary structure comprises 275 residues: Large ribosomal subunit protein uL2 (275 aa).

Positions 223-275 are disordered; sequence VAMNPVDHPHGGGEGRTGEAREPVSPWGTPSKGFKTRRNKRTNNMIVQRRKRK. A compositionally biased stretch (basic and acidic residues) spans 229–244; it reads DHPHGGGEGRTGEARE.

Belongs to the universal ribosomal protein uL2 family. Part of the 50S ribosomal subunit. Forms a bridge to the 30S subunit in the 70S ribosome.

Its function is as follows. One of the primary rRNA binding proteins. Required for association of the 30S and 50S subunits to form the 70S ribosome, for tRNA binding and peptide bond formation. It has been suggested to have peptidyltransferase activity; this is somewhat controversial. Makes several contacts with the 16S rRNA in the 70S ribosome. In Bordetella petrii (strain ATCC BAA-461 / DSM 12804 / CCUG 43448), this protein is Large ribosomal subunit protein uL2.